The following is a 992-amino-acid chain: Presequence protease, mitochondrial (992 aa).

The N-terminal 30 residues, 1–30, are a transit peptide targeting the mitochondrion; that stretch reads MNYAKLSIAFSKKTIKTHNCRLFQRWLHVG. H91 serves as a coordination point for Zn(2+). E94 (proton acceptor) is an active-site residue. H95 is a Zn(2+) binding site. E167 is an active-site residue. E192 provides a ligand contact to Zn(2+).

The protein belongs to the peptidase M16 family. PreP subfamily. As to quaternary structure, monomer and homodimer; homodimerization is induced by binding of the substrate. Zn(2+) serves as cofactor.

Its subcellular location is the mitochondrion intermembrane space. It localises to the mitochondrion matrix. Functionally, degrades mitochondrial transit peptides after their cleavage in the intermembrane space or in the matrix, and presequence peptides; clearance of these peptides is required to keep the presequence processing machinery running. Preferentially cleaves the N-terminal side of paired basic amino acid residues. Also degrades other unstructured peptides. May function as an ATP-dependent peptidase as opposed to a metalloendopeptidase. The chain is Presequence protease, mitochondrial (cym1) from Schizosaccharomyces pombe (strain 972 / ATCC 24843) (Fission yeast).